Here is a 61-residue protein sequence, read N- to C-terminus: MSRTSLEVKAKRKPKFSARAYNRCPICGRPRGYMRKFGICRICFRNMSLRGELPGVRKSSW.

Positions 24, 27, 40, and 43 each coordinate Zn(2+).

This sequence belongs to the universal ribosomal protein uS14 family. Zinc-binding uS14 subfamily. As to quaternary structure, part of the 30S ribosomal subunit. Contacts proteins S3 and S10. It depends on Zn(2+) as a cofactor.

Binds 16S rRNA, required for the assembly of 30S particles and may also be responsible for determining the conformation of the 16S rRNA at the A site. The polypeptide is Small ribosomal subunit protein uS14 (Oleidesulfovibrio alaskensis (strain ATCC BAA-1058 / DSM 17464 / G20) (Desulfovibrio alaskensis)).